We begin with the raw amino-acid sequence, 125 residues long: Cystatin-like cysteine protease inhibitor EPIC2A (125 aa).

Positions 1 to 21 (MSFLRPTLALLAVTALVTTSA) are cleaved as a signal peptide. N45 is a glycosylation site (N-linked (GlcNAc...) asparagine). The Secondary area of contact motif lies at 68–72 (QVVSG).

It belongs to the cystatin family.

The protein localises to the secreted. Secreted effector that interacts with and inhibits host apoplastic pathogenesis-related papain-like cysteine proteases. Inhibition of host proteases by a pathogen extracellular protease inhibitor forms a specific type of defense-counterdefense mechanism between plants and microbial pathogens. This chain is Cystatin-like cysteine protease inhibitor EPIC2A, found in Phytophthora infestans (strain T30-4) (Potato late blight agent).